Consider the following 273-residue polypeptide: Shikimate dehydrogenase (NADP(+)) (273 aa).

Shikimate-binding positions include serine 15 to serine 17 and threonine 62. Lysine 66 (proton acceptor) is an active-site residue. An NADP(+)-binding site is contributed by aspartate 78. Residues asparagine 87 and aspartate 103 each coordinate shikimate. NADP(+)-binding positions include glycine 127–alanine 131, asparagine 150–arginine 155, and methionine 214. Tyrosine 216 is a binding site for shikimate. NADP(+) is bound at residue glycine 238.

Belongs to the shikimate dehydrogenase family. In terms of assembly, homodimer.

It catalyses the reaction shikimate + NADP(+) = 3-dehydroshikimate + NADPH + H(+). The protein operates within metabolic intermediate biosynthesis; chorismate biosynthesis; chorismate from D-erythrose 4-phosphate and phosphoenolpyruvate: step 4/7. Its function is as follows. Involved in the biosynthesis of the chorismate, which leads to the biosynthesis of aromatic amino acids. Catalyzes the reversible NADPH linked reduction of 3-dehydroshikimate (DHSA) to yield shikimate (SA). This is Shikimate dehydrogenase (NADP(+)) from Yersinia enterocolitica serotype O:8 / biotype 1B (strain NCTC 13174 / 8081).